Here is a 443-residue protein sequence, read N- to C-terminus: Xaa-Pro dipeptidase (443 aa).

The Mn(2+) site is built by Asp-246, Asp-257, His-339, Glu-384, and Glu-423.

It belongs to the peptidase M24B family. Bacterial-type prolidase subfamily. Mn(2+) serves as cofactor.

It catalyses the reaction Xaa-L-Pro dipeptide + H2O = an L-alpha-amino acid + L-proline. In terms of biological role, splits dipeptides with a prolyl residue in the C-terminal position. The chain is Xaa-Pro dipeptidase from Shigella flexneri serotype 5b (strain 8401).